Reading from the N-terminus, the 377-residue chain is Carbamoyl phosphate synthase small chain (377 aa).

The interval 1-186 (MNTPALLVLA…LGKGFVTPDK (186 aa)) is CPSase. L-glutamine contacts are provided by Ser47, Gly238, and Gly240. The 188-residue stretch at 190 to 377 (HVVAYDFGVK…IGNMKAAKQA (188 aa)) folds into the Glutamine amidotransferase type-1 domain. The Nucleophile role is filled by Cys266. 5 residues coordinate L-glutamine: Leu267, Gln270, Asn308, Gly310, and Phe311. Active-site residues include His350 and Glu352.

This sequence belongs to the CarA family. In terms of assembly, composed of two chains; the small (or glutamine) chain promotes the hydrolysis of glutamine to ammonia, which is used by the large (or ammonia) chain to synthesize carbamoyl phosphate. Tetramer of heterodimers (alpha,beta)4.

It carries out the reaction hydrogencarbonate + L-glutamine + 2 ATP + H2O = carbamoyl phosphate + L-glutamate + 2 ADP + phosphate + 2 H(+). The catalysed reaction is L-glutamine + H2O = L-glutamate + NH4(+). It participates in amino-acid biosynthesis; L-arginine biosynthesis; carbamoyl phosphate from bicarbonate: step 1/1. It functions in the pathway pyrimidine metabolism; UMP biosynthesis via de novo pathway; (S)-dihydroorotate from bicarbonate: step 1/3. Its function is as follows. Small subunit of the glutamine-dependent carbamoyl phosphate synthetase (CPSase). CPSase catalyzes the formation of carbamoyl phosphate from the ammonia moiety of glutamine, carbonate, and phosphate donated by ATP, constituting the first step of 2 biosynthetic pathways, one leading to arginine and/or urea and the other to pyrimidine nucleotides. The small subunit (glutamine amidotransferase) binds and cleaves glutamine to supply the large subunit with the substrate ammonia. This is Carbamoyl phosphate synthase small chain from Neisseria gonorrhoeae.